The chain runs to 420 residues: Protein-lysine 6-oxidase (420 aa).

A signal peptide spans 1–27; sequence MRCAPPGLLLAQLHACIFWSGLWPAGC. A propeptide spans 28 to 171 (removed by BMP1); it reads QSPPAAWRQR…RPGREDVMVG (144 aa). Residues 54–177 form a disordered region; the sequence is AQYQPPRRRQ…VMVGDDPYSP (124 aa). N-linked (GlcNAc...) asparagine glycosylation is present at Asn78. The segment covering 82 to 92 has biased composition (low complexity); sequence PRAAAAAAARP. Pro residues predominate over residues 93–105; the sequence is QPEPQPQAQPQPR. Composition is skewed to basic residues over residues 107 to 119 and 134 to 147; these read RSSR…RRHW and APRR…SRRR. Tyr190 carries the post-translational modification Sulfotyrosine. A lysyl-oxidase like region spans residues 216–420; it reads PDLVPDPYYI…YASGCTISPY (205 aa). Intrachain disulfides connect Cys241/Cys247, Cys294/Cys343, Cys327/Cys333, Cys354/Cys364, and Cys401/Cys415. Cu cation is bound by residues His295, His297, and His299. The segment at residues 323-358 is a cross-link (lysine tyrosylquinone (Lys-Tyr)); it reads KASFCLEDTSCDYGYYRRYACTAHTQGLSPGCYDTY. Residue Tyr358 is modified to 2',4',5'-topaquinone.

This sequence belongs to the lysyl oxidase family. Requires Cu cation as cofactor. It depends on lysine tyrosylquinone residue as a cofactor. The lysine tyrosylquinone cross-link (LTQ) is generated by condensation of the epsilon-amino group of a lysine with a topaquinone produced by oxidation of tyrosine. In terms of processing, proteolytically cleaved by BMP1 which removes the propeptide. Also proteolytically cleaved by ADAMTS2 and ADAMTS14, but not by ADAMTS3, at an additional cleavage site downstream of the BMP1 cleavage site. The propeptide plays a role in directing the deposition of this enzyme to elastic fibers, via interaction with tropoelastin. Cleavage by BMP1 to remove the propeptide does not increase enzymatic activity but increases binding to collagen. Cleavage by ADAMTS2 produces a form with reduced collagen-binding activity. Post-translationally, sulfated at Tyr-190 and also at either Tyr-186 or Tyr-187 which enhances binding to collagen.

It is found in the secreted. The protein localises to the extracellular space. The catalysed reaction is L-lysyl-[protein] + O2 + H2O = (S)-2-amino-6-oxohexanoyl-[protein] + H2O2 + NH4(+). Its function is as follows. Responsible for the post-translational oxidative deamination of peptidyl lysine residues in precursors to fibrous collagen and elastin. Functionally, in addition to cross linking of extracellular matrix proteins, it may have a direct role in tumor suppression. In Gallus gallus (Chicken), this protein is Protein-lysine 6-oxidase (LOX).